Here is a 147-residue protein sequence, read N- to C-terminus: Protegrin-2 (147 aa).

An N-terminal signal peptide occupies residues 1 to 29; the sequence is METQRASLCLGRWSLWLLLLALVVPSASA. Positions 30–130 are excised as a propeptide; sequence QALSYREAVL…DITCNEVQGV (101 aa). A disordered region spans residues 61–80; sequence DQPPKADEDPGTPKPVSFTV. 4 cysteine pairs are disulfide-bonded: Cys85–Cys96, Cys107–Cys124, Cys136–Cys145, and Cys138–Cys143. Val146 is modified (valine amide).

It belongs to the cathelicidin family.

It is found in the secreted. Its function is as follows. Microbicidal activity. Active against E.coli, Listeria monocytogenes and C.albicans, in vitro. The chain is Protegrin-2 (NPG2) from Sus scrofa (Pig).